A 474-amino-acid chain; its full sequence is 3-isopropylmalate dehydratase large subunit (474 aa).

[4Fe-4S] cluster-binding residues include Cys355, Cys415, and Cys418.

The protein belongs to the aconitase/IPM isomerase family. LeuC type 1 subfamily. Heterodimer of LeuC and LeuD. [4Fe-4S] cluster is required as a cofactor.

The enzyme catalyses (2R,3S)-3-isopropylmalate = (2S)-2-isopropylmalate. It functions in the pathway amino-acid biosynthesis; L-leucine biosynthesis; L-leucine from 3-methyl-2-oxobutanoate: step 2/4. In terms of biological role, catalyzes the isomerization between 2-isopropylmalate and 3-isopropylmalate, via the formation of 2-isopropylmaleate. The protein is 3-isopropylmalate dehydratase large subunit of Shewanella oneidensis (strain ATCC 700550 / JCM 31522 / CIP 106686 / LMG 19005 / NCIMB 14063 / MR-1).